Consider the following 456-residue polypeptide: RUN domain-containing protein 3B (456 aa).

Positions 1–26 are disordered; the sequence is MASRSLGGLSGIRGGGGGGGKKSLSS. The segment covering 8 to 21 has biased composition (gly residues); it reads GLSGIRGGGGGGGK. At R13 the chain carries Omega-N-methylarginine. The RUN domain maps to 57 to 189; that stretch reads DDSSPEFNNF…IDFSFCLKGE (133 aa). Phosphoserine is present on residues S215 and S216. Residues 300–325 adopt a coiled-coil conformation; sequence AHKLEKEQLEYIIVELQDQLTVLKNN. Residues 382-405 form a disordered region; that stretch reads SLSQTSLDPGQSQEGDGKQDTLNI.

The protein belongs to the RUNDC3 family. As to quaternary structure, interacts with RAP2A.

The sequence is that of RUN domain-containing protein 3B (RUNDC3B) from Macaca fascicularis (Crab-eating macaque).